The following is a 341-amino-acid chain: C2 calcium-dependent domain-containing protein 4D (341 aa).

The span at 56-71 (RLRDPRGAEGRVDRNP) shows a compositional bias: basic and acidic residues. 2 disordered regions span residues 56-75 (RLRD…GGRN) and 134-176 (CRAP…PYAP). Residues 139–149 (SDTASSPDSSP) are compositionally biased toward low complexity. One can recognise a C2 domain in the interval 205-331 (RGGQLRLSTE…PPLAGGLGPG (127 aa)).

The polypeptide is C2 calcium-dependent domain-containing protein 4D (C2cd4d) (Mus musculus (Mouse)).